Here is a 29-residue protein sequence, read N- to C-terminus: Cyclotide mela-1 (29 aa).

The cyclopeptide (Gly-Asp) cross-link spans 1–29; sequence GKYTCGETCFKGKCYTPGCTCSYPICKKD. Disulfide bonds link C5-C19, C9-C21, and C14-C26.

In terms of processing, this is a cyclic peptide. Contains 3 disulfide bonds.

Probably participates in a plant defense mechanism (Potential). Binds to and induces leakage in phospholipd membranes, particularly ones containing 1-palmitoyl-2-oleophosphatidylethanolamine (POPE). In vitro, displays cytotoxicity against cultured cells but no hemolytic activity towards fresh erythrocytes. Not active against Gram-negative bacterium E.coli ATCC 25922 or Gram-positive bacterium S.aureus ATCC 25923 up to a concentration of 64 uM. The chain is Cyclotide mela-1 from Melicytus latifolius (Norfolk Island mahoe).